A 224-amino-acid polypeptide reads, in one-letter code: Metalloproteinase inhibitor 4 (224 aa).

A signal peptide spans 1–29 (MPGSPRPAPSWVLLLRLLALLRPPGLGEA). Cys30 contributes to the Zn(2+) binding site. Involved in metalloproteinase-binding stretches follow at residues 30–33 (CSCA) and 99–100 (SS). 6 disulfide bridges follow: Cys30–Cys102, Cys32–Cys131, Cys42–Cys156, Cys158–Cys205, Cys163–Cys168, and Cys176–Cys197. The NTR domain occupies 30-156 (CSCAPAHPQQ…SLNHHYHLNC (127 aa)).

The protein belongs to the protease inhibitor I35 (TIMP) family. In terms of tissue distribution, abundant in heart and present at low levels in many other tissues.

It localises to the secreted. Its function is as follows. Complexes with metalloproteinases (such as collagenases) and irreversibly inactivates them by binding to their catalytic zinc cofactor. Known to act on MMP-1, MMP-2, MMP-3, MMP-7 and MMP-9. The sequence is that of Metalloproteinase inhibitor 4 (TIMP4) from Homo sapiens (Human).